Here is a 362-residue protein sequence, read N- to C-terminus: 5-amino-6-(D-ribitylamino)uracil--L-tyrosine 4-hydroxyphenyl transferase (362 aa).

The Radical SAM core domain occupies 48 to 294 (ITYVVNRNIN…GDTIKNIQVS (247 aa)). [4Fe-4S] cluster contacts are provided by cysteine 62, cysteine 66, and cysteine 69.

Belongs to the radical SAM superfamily. CofH family. In terms of assembly, consists of two subunits, CofG and CofH. [4Fe-4S] cluster serves as cofactor.

The catalysed reaction is 5-amino-6-(D-ribitylamino)uracil + L-tyrosine + S-adenosyl-L-methionine = 5-amino-5-(4-hydroxybenzyl)-6-(D-ribitylimino)-5,6-dihydrouracil + 2-iminoacetate + 5'-deoxyadenosine + L-methionine + H(+). It functions in the pathway cofactor biosynthesis; coenzyme F0 biosynthesis. Functionally, catalyzes the radical-mediated synthesis of 5-amino-5-(4-hydroxybenzyl)-6-(D-ribitylimino)-5,6-dihydrouracil from 5-amino-6-(D-ribitylamino)uracil and L-tyrosine. The protein is 5-amino-6-(D-ribitylamino)uracil--L-tyrosine 4-hydroxyphenyl transferase of Methanococcus aeolicus (strain ATCC BAA-1280 / DSM 17508 / OCM 812 / Nankai-3).